The primary structure comprises 206 residues: Ras-related protein RABG3c (206 aa).

15 to 22 (GDSGVGKT) contacts GTP. Residues 37–45 (YKATIGADF) carry the Effector region motif. Residues 63–67 (DTAGQ), 125–128 (NKTD), and 158–159 (SA) contribute to the GTP site. S-geranylgeranyl cysteine attachment occurs at residues Cys-204 and Cys-206. Residue Cys-206 is modified to Cysteine methyl ester.

This sequence belongs to the small GTPase superfamily. Rab family.

It localises to the cell membrane. Intracellular vesicle trafficking and protein transport. This chain is Ras-related protein RABG3c (RABG3C), found in Arabidopsis thaliana (Mouse-ear cress).